We begin with the raw amino-acid sequence, 124 residues long: Small ribosomal subunit protein bS6 (124 aa).

Residues 96–124 (ETGPSPMMKEVQREEAKKAAAAQPAEAQA) are disordered. Low complexity predominate over residues 114–124 (AAAAQPAEAQA).

This sequence belongs to the bacterial ribosomal protein bS6 family.

Binds together with bS18 to 16S ribosomal RNA. In Burkholderia orbicola (strain MC0-3), this protein is Small ribosomal subunit protein bS6.